The sequence spans 147 residues: Acidic phospholipase A2 beta-bungarotoxin A3 chain (147 aa).

Residues 1-19 (MYPAHLLVLSAVCVSLLGA) form the signal peptide. Positions 20-27 (ANIPPHPL) are excised as a propeptide. 6 disulfide bridges follow: Cys54-Cys146, Cys56-Cys72, Cys71-Cys127, Cys78-Cys120, Cys88-Cys113, and Cys106-Cys118. The Ca(2+) site is built by Tyr55, Gly57, and Gly59. His75 is a catalytic residue. Residue Asp76 participates in Ca(2+) binding. The active site involves Asp121.

The protein belongs to the phospholipase A2 family. Group I subfamily. D49 sub-subfamily. Heterodimer; disulfide-linked. The A chains have phospholipase A2 activity and the B chains show homology with the basic protease inhibitors. The A3 chain is found in beta-5 bungarotoxins. Ca(2+) is required as a cofactor. Expressed by the venom gland.

The protein resides in the secreted. The enzyme catalyses a 1,2-diacyl-sn-glycero-3-phosphocholine + H2O = a 1-acyl-sn-glycero-3-phosphocholine + a fatty acid + H(+). In terms of biological role, snake venom phospholipase A2 (PLA2) that inhibits neuromuscular transmission by blocking acetylcholine release from the nerve termini. PLA2 catalyzes the calcium-dependent hydrolysis of the 2-acyl groups in 3-sn-phosphoglycerides. The polypeptide is Acidic phospholipase A2 beta-bungarotoxin A3 chain (Bungarus multicinctus (Many-banded krait)).